The chain runs to 456 residues: Gamma-aminobutyric acid receptor subunit alpha-1 (456 aa).

A signal peptide spans 1 to 27 (MRKSPGLSDCLWAWILLLSTLTGRSYG). At 28–253 (QPSLQDELKD…FHLKRKIGYF (226 aa)) the chain is on the extracellular side. Residue Asn-38 is glycosylated (N-linked (GlcNAc...) asparagine). Position 94 (Arg-94) interacts with 4-aminobutanoate. Asn-138 is a glycosylation site (N-linked (GlcNAc...) asparagine). A 4-aminobutanoate-binding site is contributed by Thr-157. A disulfide bond links Cys-166 and Cys-180. A helical transmembrane segment spans residues 254-274 (VIQTYLPCIMTVILSQVSFWL). The Cytoplasmic portion of the chain corresponds to 275 to 279 (NRESV). A helical membrane pass occupies residues 280 to 301 (PARTVFGVTTVLTMTTLSISAR). Residues 302–311 (NSLPKVAYAT) lie on the Extracellular side of the membrane. A helical transmembrane segment spans residues 312 to 333 (AMDWFIAVCYAFVFSALIEFAT). Residues 334-421 (VNYFTKRGYA…TFNSVSKIDR (88 aa)) are Cytoplasmic-facing. A helical membrane pass occupies residues 422–441 (LSRIAFPLLFGIFNLIYWAT). Topologically, residues 442–456 (YLNREPQLKAPTPHQ) are extracellular.

It belongs to the ligand-gated ion channel (TC 1.A.9) family. Gamma-aminobutyric acid receptor (TC 1.A.9.5) subfamily. GABRA1 sub-subfamily. In terms of assembly, heteropentamer, formed by a combination of alpha (GABRA1-6), beta (GABRB1-3), gamma (GABRG1-3), delta (GABRD), epsilon (GABRE), rho (GABRR1-3), pi (GABRP) and theta (GABRQ) subunits, each subunit exhibiting distinct physiological and pharmacological properties. Interacts with UBQLN1. Interacts with TRAK1. Interacts with KIF21B. Identified in a complex of 720 kDa composed of LHFPL4, NLGN2, GABRA1, GABRB2, GABRG2 and GABRB3. Interacts with LHFPL4. Interacts with NLGN2. Interacts with SHISA7; interaction leads to the regulation of GABA(A) receptor trafficking, channel deactivation kinetics and pharmacology.

It is found in the postsynaptic cell membrane. Its subcellular location is the cell membrane. The protein localises to the cytoplasmic vesicle membrane. It catalyses the reaction chloride(in) = chloride(out). Allosterically activated by benzodiazepines, the neuroanesthetic alphaxalone and pentobarbital. Inhibited by the antagonist bicuculline. Potentiated by histamine. Its function is as follows. Alpha subunit of the heteropentameric ligand-gated chloride channel gated by gamma-aminobutyric acid (GABA), a major inhibitory neurotransmitter in the brain. GABA-gated chloride channels, also named GABA(A) receptors (GABAAR), consist of five subunits arranged around a central pore and contain GABA active binding site(s) located at the alpha and beta subunit interface(s). When activated by GABA, GABAARs selectively allow the flow of chloride anions across the cell membrane down their electrochemical gradient. Alpha-1/GABRA1-containing GABAARs are largely synaptic. Chloride influx into the postsynaptic neuron following GABAAR opening decreases the neuron ability to generate a new action potential, thereby reducing nerve transmission. GABAARs containing alpha-1 and beta-2 or -3 subunits exhibit synaptogenic activity; the gamma-2 subunit being necessary but not sufficient to induce rapid synaptic contacts formation. GABAARs function also as histamine receptor where histamine binds at the interface of two neighboring beta subunits and potentiates GABA response. GABAARs containing alpha, beta and epsilon subunits also permit spontaneous chloride channel activity while preserving the structural information required for GABA-gated openings. Alpha-1-mediated plasticity in the orbitofrontal cortex regulates context-dependent action selection. Together with rho subunits, may also control neuronal and glial GABAergic transmission in the cerebellum. This chain is Gamma-aminobutyric acid receptor subunit alpha-1 (GABRA1), found in Pongo abelii (Sumatran orangutan).